Here is a 37-residue protein sequence, read N- to C-terminus: Dolichyl-diphosphooligosaccharide--protein glycosyltransferase subunit 4 (37 aa).

Over 1–4 (MITD) the chain is Lumenal. A helical membrane pass occupies residues 5-25 (VQLAIFANMLGVSLFLLVVLY). At 26-37 (HYVAVNNPKKQE) the chain is on the cytoplasmic side.

This sequence belongs to the OST4 family. As to quaternary structure, component of the oligosaccharyltransferase (OST) complex. OST exists in two different complex forms which contain common core subunits RPN1, RPN2, OST48, OST4, DAD1 and TMEM258, either STT3A or STT3B as catalytic subunits, and form-specific accessory subunits. STT3A complex assembly occurs through the formation of 3 subcomplexes. Subcomplex 1 contains RPN1 and TMEM258, subcomplex 2 contains the STT3A-specific subunits STT3A, DC2/OSTC, and KCP2 as well as the core subunit OST4, and subcomplex 3 contains RPN2, DAD1, and OST48. The STT3A complex can form stable complexes with the Sec61 complex or with both the Sec61 and TRAP complexes.

It localises to the endoplasmic reticulum. The protein resides in the endoplasmic reticulum membrane. The protein operates within protein modification; protein glycosylation. Its function is as follows. Subunit of the oligosaccharyl transferase (OST) complex that catalyzes the initial transfer of a defined glycan (Glc(3)Man(9)GlcNAc(2) in eukaryotes) from the lipid carrier dolichol-pyrophosphate to an asparagine residue within an Asn-X-Ser/Thr consensus motif in nascent polypeptide chains, the first step in protein N-glycosylation. N-glycosylation occurs cotranslationally and the complex associates with the Sec61 complex at the channel-forming translocon complex that mediates protein translocation across the endoplasmic reticulum (ER). All subunits are required for a maximal enzyme activity. Specifically involved in maintaining stability of STT3A-containing OST complexes. The chain is Dolichyl-diphosphooligosaccharide--protein glycosyltransferase subunit 4 from Homo sapiens (Human).